A 313-amino-acid polypeptide reads, in one-letter code: tRNA dimethylallyltransferase (313 aa).

Position 11 to 18 (Gly11 to Thr18) interacts with ATP. Thr13–Thr18 lines the substrate pocket. 3 interaction with substrate tRNA regions span residues Asp36–Leu39, Gln160–Arg164, and Arg243–Arg248.

Belongs to the IPP transferase family. Monomer. Mg(2+) is required as a cofactor.

It carries out the reaction adenosine(37) in tRNA + dimethylallyl diphosphate = N(6)-dimethylallyladenosine(37) in tRNA + diphosphate. Catalyzes the transfer of a dimethylallyl group onto the adenine at position 37 in tRNAs that read codons beginning with uridine, leading to the formation of N6-(dimethylallyl)adenosine (i(6)A). This chain is tRNA dimethylallyltransferase, found in Neisseria meningitidis serogroup C / serotype 2a (strain ATCC 700532 / DSM 15464 / FAM18).